Here is a 259-residue protein sequence, read N- to C-terminus: 3'-5' ssDNA/RNA exonuclease TatD (259 aa).

Residues Glu-92, His-128, and His-153 each contribute to the a divalent metal cation site.

Belongs to the metallo-dependent hydrolases superfamily. TatD-type hydrolase family. TatD subfamily. Monomer. Requires Mg(2+) as cofactor.

Its subcellular location is the cytoplasm. In terms of biological role, 3'-5' exonuclease that prefers single-stranded DNA and RNA. May play a role in the H(2)O(2)-induced DNA damage repair. The polypeptide is 3'-5' ssDNA/RNA exonuclease TatD (Erwinia tasmaniensis (strain DSM 17950 / CFBP 7177 / CIP 109463 / NCPPB 4357 / Et1/99)).